The chain runs to 457 residues: Nuclear distribution protein PAC1 (457 aa).

The stretch at 73-106 forms a coiled coil; the sequence is SSIVRLQRRIIELEKEIQELTDENENLRENGPSS. WD repeat units follow at residues 126–165, 169–211, 216–257, 260–299, 322–362, 382–419, and 423–457; these read SAGA…MPVA, AHMR…LQLI, GHEH…CLKS, PHTE…SFGT, SHRF…FVAH, GHSS…VVRS, and LHSG…ILMK.

The protein belongs to the WD repeat LIS1/nudF family. As to quaternary structure, self-associates. Interacts with NDL1 and dynein.

The protein resides in the cytoplasm. The protein localises to the cytoskeleton. Its subcellular location is the spindle pole. Its function is as follows. Positively regulates the activity of the minus-end directed microtubule motor protein dynein. Plays a central role in positioning the mitotic spindle at the bud neck during cell division. Targets cytoplasmic dynein to microtubule plus ends, thereby promoting dynein-mediated microtubule sliding along the bud cortex and consequently the movement of the mitotic spindle to the bud neck. This chain is Nuclear distribution protein PAC1, found in Lachancea thermotolerans (strain ATCC 56472 / CBS 6340 / NRRL Y-8284) (Yeast).